We begin with the raw amino-acid sequence, 961 residues long: Probable exosome complex exonuclease RRP44 (961 aa).

The 116-residue stretch at 73 to 188 (HALIVDSTSL…LVFDEDSKKR (116 aa)) folds into the PINc domain. The 107-residue stretch at 232–338 (IFDEYLSHDR…DEENDDENDE (107 aa)) folds into the CSD1 domain. A disordered region spans residues 322–346 (ADDMGNEDEENDDENDEPKAKKSKK). Acidic residues predominate over residues 325 to 337 (MGNEDEENDDEND). Residues 381 to 447 (LFCPAERLIP…ENEVLLLEHD (67 aa)) enclose the CSD2 domain. In terms of domain architecture, RNB spans 479–809 (RVDLRDLTIC…IVHRLLAAAI (331 aa)).

It belongs to the RNR ribonuclease family. In terms of assembly, component of the RNA exosome complex. Ubiquitously expressed.

The protein resides in the nucleus. It localises to the nucleoplasm. Functionally, putative catalytic component of the RNA exosome complex which has 3'-&gt;5' exoribonuclease activity and participates in a multitude of cellular RNA processing and degradation events. Has both 3'-5' exonuclease and endonuclease activities. Involved in regulation of antisense ribosomal siRNA production. The polypeptide is Probable exosome complex exonuclease RRP44 (dis-3) (Caenorhabditis elegans).